The following is a 338-amino-acid chain: MEYSSVFDVAIVGAGPVGLFTVFQAGMLGMNSCVIDALDIVGGQCAVLYPEKPIYDIPGYPMITAQDLVNNLKKQAEPFAPVYIMGQFVESISEGPDCFVLQTNKGTSVKCRAIIVAAGSGGFGPNRPPLDGIMEYENKSVFYNVSQMATFKNKKVVIAGGGDSAADWAVNLAEVADKLYVIHRRKSFRCAPNTLKKLEELADEGRINVLIPYQLAGLDGENGELRSVVVRNITTKEEIPIGADFLLPFFGISANLGEIVNWGLGVEGFQIPVEQSTCRTRRSKIYAVGDIAAYPGKIKLILVGFSEAALACQDIRAVLFPDTPLNFQYSTSKGIPTL.

7 residues coordinate FAD: Asp-36, Gln-44, Tyr-49, Val-89, Phe-123, Asp-290, and Thr-331.

Belongs to the ferredoxin--NADP reductase type 2 family. Homodimer. Requires FAD as cofactor.

It carries out the reaction 2 reduced [2Fe-2S]-[ferredoxin] + NADP(+) + H(+) = 2 oxidized [2Fe-2S]-[ferredoxin] + NADPH. The polypeptide is Ferredoxin--NADP reductase (Anaplasma phagocytophilum (strain HZ)).